The chain runs to 131 residues: MNHRVQPIIAVLIALGAFGFLYVLVTNPGEMAKMAVTVIVAGIIIYFIVKYVMNRNAGSEGAAFKKAAKQSRRRMKEQKAKHRAGHKGRVSHLRSVPSASKPKPMILKKKSQTQLTVIEGKKNKKKNRALF.

A run of 2 helical transmembrane segments spans residues 5 to 25 (VQPI…YVLV) and 34 to 54 (MAVT…YVMN). A disordered region spans residues 62–131 (AAFKKAAKQS…KNKKKNRALF (70 aa)). 2 stretches are compositionally biased toward basic residues: residues 66-92 (KAAK…RVSH) and 122-131 (KNKKKNRALF).

It localises to the cell membrane. This is an uncharacterized protein from Bacillus subtilis (strain 168).